Here is a 628-residue protein sequence, read N- to C-terminus: tRNA uridine 5-carboxymethylaminomethyl modification enzyme MnmG (628 aa).

Residues 14 to 19, Val-126, and Ser-181 each bind FAD; that span reads GAGHAG. 273–287 provides a ligand contact to NAD(+); the sequence is GPRYCPSIEDKVVRF. Gln-370 is an FAD binding site.

The protein belongs to the MnmG family. In terms of assembly, homodimer. Heterotetramer of two MnmE and two MnmG subunits. FAD is required as a cofactor.

Its subcellular location is the cytoplasm. NAD-binding protein involved in the addition of a carboxymethylaminomethyl (cmnm) group at the wobble position (U34) of certain tRNAs, forming tRNA-cmnm(5)s(2)U34. This chain is tRNA uridine 5-carboxymethylaminomethyl modification enzyme MnmG, found in Bacillus subtilis (strain 168).